A 71-amino-acid polypeptide reads, in one-letter code: Vitellogenin-A1 (71 aa).

The signal sequence occupies residues 1–15 (MRGIILALLLAIAGS). One can recognise a Vitellogenin domain in the interval 24 to 71 (FSESKTSVYNYEAVILNGFPESGLSRAGIKINCKVEISAYAQRSYFLK).

In terms of tissue distribution, produced by the liver, secreted into the blood and then sequestered by receptor mediated endocytosis into growing oocytes, where it is generally cleaved, giving rise to the respective yolk components.

In terms of biological role, precursor of the major egg-yolk proteins that are sources of nutrients during early development of oviparous organisms. The protein is Vitellogenin-A1 of Xenopus laevis (African clawed frog).